A 303-amino-acid chain; its full sequence is GPN-loop GTPase 2 (303 aa).

29 to 34 (GSGKST) contacts GTP. Positions 85-87 (GPN) match the Gly-Pro-Asn (GPN)-loop; involved in dimer interface motif. 187–190 (SKMD) is a GTP binding site.

This sequence belongs to the GPN-loop GTPase family. In terms of assembly, heterodimers with gpn1 or gpn3. Binds to RNA polymerase II (RNAPII).

Its function is as follows. Small GTPase required for proper localization of RNA polymerase II and III (RNAPII and RNAPIII). May act at an RNAP assembly step prior to nuclear import. In Xenopus tropicalis (Western clawed frog), this protein is GPN-loop GTPase 2.